The chain runs to 474 residues: Hepatocyte nuclear factor 4-alpha (474 aa).

The segment at residues 57 to 132 (SALCAICGDR…AGMKKEAVQN (76 aa)) is a DNA-binding region (nuclear receptor). 2 NR C4-type zinc fingers span residues 60-80 (CAIC…CDGC) and 96-120 (CRFS…LKKC). Ser142 and Ser143 each carry phosphoserine. A Phosphotyrosine modification is found at Tyr144. The 231-residue stretch at 147–377 (SSLPSINALL…NLLQEMLLGG (231 aa)) folds into the NR LBD domain. Residue Thr166 is modified to Phosphothreonine. Position 167 is a phosphoserine (Ser167). Residues Lys234 and Lys307 each participate in a glycyl lysine isopeptide (Lys-Gly) (interchain with G-Cter in ubiquitin) cross-link. Ser313 bears the Phosphoserine; by AMPK mark. The short motif at 368–376 (NLLQEMLLG) is the 9aaTAD element. The tract at residues 419–447 (EWPRPRGQAATPETPQPSPPGGSGSEPYK) is disordered. 2 positions are modified to phosphothreonine: Thr429 and Thr432. Ser436 is subject to Phosphoserine. N6-acetyllysine is present on Lys458.

This sequence belongs to the nuclear hormone receptor family. NR2 subfamily. In terms of assembly, homodimerization is required for HNF4-alpha to bind to its recognition site. Interacts with CLOCK, BMAL1, CRY1, CRY2, PER1 and PER2. Interacts with NR0B2/SHP; the resulting heterodimer is transcriptionally inactive. Interacts with DDX3X; this interaction disrupts the interaction between HNF4 and NR0B2 that forms inactive heterodimers and enhances the formation of active HNF4 homodimers. Post-translationally, phosphorylated on tyrosine residue(s); phosphorylation is important for its DNA-binding activity. Phosphorylation may directly or indirectly play a regulatory role in the subnuclear distribution. Phosphorylation at Ser-313 by AMPK reduces the ability to form homodimers and bind DNA. In terms of processing, acetylation at Lys-458 lowers transcriptional activation by about two-fold.

Its subcellular location is the nucleus. In terms of biological role, transcriptional regulator which controls the expression of hepatic genes during the transition of endodermal cells to hepatic progenitor cells, facilitating the recruitment of RNA pol II to the promoters of target genes. Activates the transcription of CYP2C38. Represses the CLOCK-BMAL1 transcriptional activity and is essential for circadian rhythm maintenance and period regulation in the liver and colon cells. This is Hepatocyte nuclear factor 4-alpha (HNF4A) from Homo sapiens (Human).